Consider the following 178-residue polypeptide: ATP-dependent protease subunit HslV (178 aa).

T7 is a catalytic residue. Positions 162, 165, and 168 each coordinate Na(+).

This sequence belongs to the peptidase T1B family. HslV subfamily. In terms of assembly, a double ring-shaped homohexamer of HslV is capped on each side by a ring-shaped HslU homohexamer. The assembly of the HslU/HslV complex is dependent on binding of ATP.

Its subcellular location is the cytoplasm. It carries out the reaction ATP-dependent cleavage of peptide bonds with broad specificity.. Allosterically activated by HslU binding. Functionally, protease subunit of a proteasome-like degradation complex believed to be a general protein degrading machinery. The polypeptide is ATP-dependent protease subunit HslV (Paraburkholderia phymatum (strain DSM 17167 / CIP 108236 / LMG 21445 / STM815) (Burkholderia phymatum)).